Here is an 83-residue protein sequence, read N- to C-terminus: Putative membrane protein insertion efficiency factor (83 aa).

This sequence belongs to the UPF0161 family.

It localises to the cell inner membrane. Could be involved in insertion of integral membrane proteins into the membrane. The sequence is that of Putative membrane protein insertion efficiency factor from Pelagibacter ubique (strain HTCC1062).